The chain runs to 459 residues: ATP-dependent protease ATPase subunit HslU (459 aa).

ATP is bound by residues V26, G68–E73, D271, E337, and R409.

The protein belongs to the ClpX chaperone family. HslU subfamily. As to quaternary structure, a double ring-shaped homohexamer of HslV is capped on each side by a ring-shaped HslU homohexamer. The assembly of the HslU/HslV complex is dependent on binding of ATP.

Its subcellular location is the cytoplasm. In terms of biological role, ATPase subunit of a proteasome-like degradation complex; this subunit has chaperone activity. The binding of ATP and its subsequent hydrolysis by HslU are essential for unfolding of protein substrates subsequently hydrolyzed by HslV. HslU recognizes the N-terminal part of its protein substrates and unfolds these before they are guided to HslV for hydrolysis. The sequence is that of ATP-dependent protease ATPase subunit HslU from Xylella fastidiosa (strain M12).